Here is an 84-residue protein sequence, read N- to C-terminus: Mitochondrial import inner membrane translocase subunit Tim9 (84 aa).

The Twin CX3C motif motif lies at 36–60 (CFQSCITNFRIRKLDDEEQLCVYKC). 2 disulfide bridges follow: Cys36–Cys60 and Cys40–Cys56.

This sequence belongs to the small Tim family. Heterohexamer; composed of 3 copies of timm9 and 3 copies of timm10, named soluble 70 kDa complex. Associates directly with the TIM22 complex, whose core is composed of timm22. Interacts with the transmembrane regions of multi-pass transmembrane proteins in transit.

Its subcellular location is the mitochondrion inner membrane. Its function is as follows. Component of the TIM22 complex, a complex that mediates the import and insertion of multi-pass transmembrane proteins into the mitochondrial inner membrane. The TIM22 complex forms a twin-pore translocase that uses the membrane potential as external driving force. The chain is Mitochondrial import inner membrane translocase subunit Tim9 (timm9) from Dictyostelium discoideum (Social amoeba).